Here is a 508-residue protein sequence, read N- to C-terminus: Photosystem II CP47 reaction center protein (508 aa).

The next 6 membrane-spanning stretches (helical) occupy residues 21 to 36 (SVHI…WAGS), 101 to 115 (IVFS…IWHW), 140 to 156 (GIHL…FGAF), 203 to 218 (IAAG…FHLS), 237 to 252 (VLSS…AFVV), and 457 to 472 (SFAL…HGAR).

It belongs to the PsbB/PsbC family. PsbB subfamily. As to quaternary structure, PSII is composed of 1 copy each of membrane proteins PsbA, PsbB, PsbC, PsbD, PsbE, PsbF, PsbH, PsbI, PsbJ, PsbK, PsbL, PsbM, PsbT, PsbX, PsbY, PsbZ, Psb30/Ycf12, at least 3 peripheral proteins of the oxygen-evolving complex and a large number of cofactors. It forms dimeric complexes. Binds multiple chlorophylls. PSII binds additional chlorophylls, carotenoids and specific lipids. serves as cofactor.

It is found in the plastid. Its subcellular location is the chloroplast thylakoid membrane. In terms of biological role, one of the components of the core complex of photosystem II (PSII). It binds chlorophyll and helps catalyze the primary light-induced photochemical processes of PSII. PSII is a light-driven water:plastoquinone oxidoreductase, using light energy to abstract electrons from H(2)O, generating O(2) and a proton gradient subsequently used for ATP formation. This chain is Photosystem II CP47 reaction center protein, found in Manihot esculenta (Cassava).